Here is a 334-residue protein sequence, read N- to C-terminus: MMAFAPPKSIDGPKMQTKMSTWTPLNHQLLNDQVFEERRALLGKWFDKWTDSQRRRILTGLLERCSLSQQKFCCRKLQEKIPAEALDFTTKLPRVLSVYIFSFLDPRSLCRCAQVSWYWKSLAELDQLWMLKCLRFNWYISFSPTPFEQGVWKKHYIQMVRELHVTKPKTPPKDEFTTADVQPIPGNSPDEKQSPSLAFRSSSSLRKKNNPGEKELPPWRSSDKHPTDIIRFNYLDNCDPELFRLGRRKRSEVTPDFKRQLRDKKNKLQDRARLRKAQSLISLSSPPKVPVRLAWPLHLPVAPSDREAATEALLEHLQKHPGLQSPSPRLQSQS.

The F-box domain maps to 86-132 (LDFTTKLPRVLSVYIFSFLDPRSLCRCAQVSWYWKSLAELDQLWMLK). Disordered regions lie at residues 168–222 (PKTP…WRSS) and 314–334 (LEHL…QSQS). Positions 194 to 204 (SPSLAFRSSSS) are enriched in low complexity. A compositionally biased stretch (basic and acidic residues) spans 210–222 (NPGEKELPPWRSS). Residues 323–334 (LQSPSPRLQSQS) show a composition bias toward low complexity.

Part of a SCF (SKP1-cullin-F-box) protein ligase complex.

Its function is as follows. Probably recognizes and binds to some phosphorylated proteins and promotes their ubiquitination and degradation. The sequence is that of F-box only protein 16 (Fbxo16) from Mus musculus (Mouse).